A 45-amino-acid polypeptide reads, in one-letter code: Pyruvate dehydrogenase E1 component (45 aa).

As to quaternary structure, homodimer. The cofactor is thiamine diphosphate.

It catalyses the reaction N(6)-[(R)-lipoyl]-L-lysyl-[protein] + pyruvate + H(+) = N(6)-[(R)-S(8)-acetyldihydrolipoyl]-L-lysyl-[protein] + CO2. In terms of biological role, the pyruvate dehydrogenase complex catalyzes the overall conversion of pyruvate to acetyl-CoA and CO(2). It contains multiple copies of three enzymatic components: pyruvate dehydrogenase (E1), dihydrolipoamide acetyltransferase (E2) and lipoamide dehydrogenase (E3). The protein is Pyruvate dehydrogenase E1 component of Azotobacter vinelandii.